A 584-amino-acid polypeptide reads, in one-letter code: Extracellular serine/threonine protein kinase FAM20C (584 aa).

At 1–10 (MKMMLVRRFR) the chain is on the cytoplasmic side. A propeptide spanning residues 1–92 (MKMMLVRRFR…PNKHTLRILQ (92 aa)) is cleaved from the precursor. Residues 11–31 (VLILMVFLVACALHIALDLLP) form a helical; Signal-anchor for type II membrane protein membrane-spanning segment. The Lumenal portion of the chain corresponds to 32–584 (RLERRGARPS…DTEHRAASAR (553 aa)). 2 disordered regions span residues 62-81 (QVRGRPGEPPAASSAAGDAG) and 94-159 (FSSD…GDAS). Composition is skewed to low complexity over residues 71-81 (PAASSAAGDAG) and 95-112 (SSDPSSNLSSHSLEKLPP). N-linked (GlcNAc...) asparagine glycosylation occurs at N101. S106 carries the post-translational modification Phosphoserine. Positions 116 to 149 (PAERALRGRDPGALRPHDPAHRPLLRDPGPRRSE) are enriched in basic and acidic residues. The ATP site is built by Q269, K285, and E306. E306 provides a ligand contact to Mn(2+). N-linked (GlcNAc...) asparagine glycosylation is present at N335. Residues 354–565 (FISPANNICF…AVRDCVERNG (212 aa)) are kinase domain. 2 cysteine pairs are disulfide-bonded: C362–C378 and C367–C371. 389–392 (AAFL) is a binding site for ATP. Cystine bridges form between C426-C500 and C501-C560. Residue D458 is part of the active site. E463 lines the ATP pocket. A glycan (N-linked (GlcNAc...) asparagine) is linked at N470. D478 is an ATP binding site. Position 478 (D478) interacts with Mn(2+).

It belongs to the FAM20 family. Homodimer; disulfide-linked. Interacts with FAM20A; probably forming a heterotetramer of 2 subunits of FAM20A and 2 subunits of FAM20C. Interacts with protease MBTPS1/S1P; the interaction results in FAM20C cleavage and secretion. Interacts with COPII components SEC23A and SEC24A; transport of FAM20C from the endoplasmic reticulum to the Golgi is likely to be mediated by COPII vesicles. The cofactor is Mn(2+). In terms of processing, N-glycosylation is required for folding. Post-translationally, autophosphorylated. Propeptide cleavage by MBTPS1/S1P promotes FAM20C secretion and maximal kinase activity which is essential for efficient osteoblast differentiation and biomineralization. As to expression, widely expressed.

The protein resides in the golgi apparatus membrane. It localises to the secreted. It is found in the endoplasmic reticulum. It carries out the reaction L-seryl-[protein] + ATP = O-phospho-L-seryl-[protein] + ADP + H(+). It catalyses the reaction L-threonyl-[protein] + ATP = O-phospho-L-threonyl-[protein] + ADP + H(+). Its activity is regulated as follows. Serine/threonine protein kinase activity is increased upon interaction with FAM20A. In terms of biological role, golgi serine/threonine protein kinase that phosphorylates secretory pathway proteins within Ser-x-Glu/pSer motifs and plays a key role in biomineralization of bones and teeth. Constitutes the main protein kinase for extracellular proteins, generating the majority of the extracellular phosphoproteome. Mainly phosphorylates proteins within the Ser-x-Glu/pSer motif, but also displays a broader substrate specificity. Phosphorylates ERO1A, enhancing its activity which is required to maintain endoplasmic reticulum redox homeostasis and for oxidative protein folding. During endoplasmic reticulum stress, phosphorylates P4HB/PDIA1 which induces a functional switch, causing P4HB to change from an oxidoreductase to a molecular chaperone. This is critical to maintain ER proteostasis and reduce cell death under ER stress. Phosphorylation of P4HB also promotes its interaction with ERN1, leading to reduced activity of ERN1, a key sensor for the endoplasmic reticulum unfolded protein response. Required for osteoblast differentiation and mineralization. Phosphorylates casein as well as a number of proteins involved in biomineralization such as AMELX, AMTN, ENAM and SPP1/OPN. In addition to its role in biomineralization, also plays a role in lipid homeostasis, wound healing and cell migration and adhesion. The protein is Extracellular serine/threonine protein kinase FAM20C of Homo sapiens (Human).